The sequence spans 233 residues: tRNA (guanine-N(1)-)-methyltransferase (233 aa).

Residues G110 and 130–135 (IGDYVM) each bind S-adenosyl-L-methionine.

Belongs to the RNA methyltransferase TrmD family. Homodimer.

It is found in the cytoplasm. It catalyses the reaction guanosine(37) in tRNA + S-adenosyl-L-methionine = N(1)-methylguanosine(37) in tRNA + S-adenosyl-L-homocysteine + H(+). In terms of biological role, specifically methylates guanosine-37 in various tRNAs. The sequence is that of tRNA (guanine-N(1)-)-methyltransferase from Finegoldia magna (strain ATCC 29328 / DSM 20472 / WAL 2508) (Peptostreptococcus magnus).